The sequence spans 290 residues: HTH-type transcriptional regulator BudR (290 aa).

Positions Met-1–Thr-58 constitute an HTH lysR-type domain. The segment at residues Phe-18–Gln-37 is a DNA-binding region (H-T-H motif).

The protein belongs to the LysR transcriptional regulatory family.

Regulator of the budABC operon for 2,3-butanediol synthesis. This is HTH-type transcriptional regulator BudR (budR) from Raoultella terrigena (Klebsiella terrigena).